The chain runs to 472 residues: Glycerol-3-phosphate acyltransferase, chloroplastic (472 aa).

The N-terminal 102 residues, 1–102, are a transit peptide targeting the chloroplast; sequence MLVLSSSAPP…EIPVKKEDDN (102 aa). The short motif at 241-246 is the HXXXXD motif element; the sequence is HQSEAD.

It belongs to the GPAT/DAPAT family.

It is found in the plastid. The protein localises to the chloroplast stroma. The enzyme catalyses sn-glycerol 3-phosphate + an acyl-CoA = a 1-acyl-sn-glycero-3-phosphate + CoA. It participates in phospholipid metabolism; CDP-diacylglycerol biosynthesis; CDP-diacylglycerol from sn-glycerol 3-phosphate: step 1/3. Its function is as follows. Esterifies acyl-group from acyl-ACP to the sn-1 position of glycerol-3-phosphate. The enzyme from chilling-resistant plants discriminates against non-fluid palmitic acid and selects oleic acid whereas the enzyme from sensitive plants accepts both fatty acids. This is an oleate-selective acyltransferase. This is Glycerol-3-phosphate acyltransferase, chloroplastic (GAT) from Spinacia oleracea (Spinach).